We begin with the raw amino-acid sequence, 546 residues long: Peptidoglycan transport ATP-binding protein YejF (546 aa).

2 ABC transporter domains span residues 12-261 and 291-530; these read VRDL…RHLL and IKAG…KALL. Residues 46-53 and 323-330 contribute to the ATP site; these read GESGSGKS and GESGSGKT.

Belongs to the ABC transporter superfamily. The complex is composed of one ATP-binding protein (YejF), two transmembrane proteins (YejB and YejE) and a solute-binding protein (YepA or YejA).

The protein localises to the cell inner membrane. Functionally, part of the ABC transporter complex YejBEF-YepA involved in the uptake of muropeptides, the breakdown products of cell wall peptidoglycan. The import of muropeptides into the cell enables peptidoglycan recycling, which is vital for cell wall integrity in this bacterium. Is also probably part of the ABC transporter complex YejABEF, which is likely involved in broad-spectrum peptide import. Responsible for energy coupling to the transport system. This is Peptidoglycan transport ATP-binding protein YejF from Agrobacterium fabrum (strain C58 / ATCC 33970) (Agrobacterium tumefaciens (strain C58)).